The sequence spans 783 residues: Tripartite motif-containing protein 67 (783 aa).

The segment at 7–42 adopts an RING-type; degenerate zinc-finger fold; it reads CPVCGSLFREPIILPCSHNVCLPCARTIAVQTPDGE. The B box-type 1; degenerate zinc-finger motif lies at 206 to 253; that stretch reads AICQLCDRTPPEPAATLCEQCDVLYCSACQLKCHPSRGPFAKHRLVQP. Residues 247–295 form a disordered region; sequence KHRLVQPPPPPPPPAEAASGPTGTAQGAPSGGGGCKSPGGAGAGATGGS. Residues 252–261 show a composition bias toward pro residues; sequence QPPPPPPPPA. Over residues 275–293 the composition is skewed to gly residues; that stretch reads PSGGGGCKSPGGAGAGATG. The B box-type 2 zinc finger occupies 298–340; it reads RKFPTCPEHEMENYSMYCVSCRTPVCYLCLEEGRHAKHEVKPL. Positions 303, 306, 326, and 332 each coordinate Zn(2+). Residues 345–382 are a coiled coil; that stretch reads KQHKAQLSQALNGVSDKAKEAKEFLVQLKNILQQIQEN. The region spanning 448-506 is the COS domain; that stretch reads IKENDPSGFLQISDALIKRVQVSQEQWVKGALEPKVSAEFDLTLDSEPLLQAIHQLDFI. One can recognise a Fibronectin type-III domain in the interval 513–607; the sequence is PPVPLLQLEK…KTVVLQTSDV (95 aa). Positions 589-780 constitute a B30.2/SPRY domain; the sequence is NSSGVGPYSK…VPTNLGRPKL (192 aa).

It belongs to the TRIM/RBCC family.

It is found in the cytoplasm. Its subcellular location is the cytoskeleton. This chain is Tripartite motif-containing protein 67 (TRIM67), found in Homo sapiens (Human).